A 164-amino-acid chain; its full sequence is Gastrin-releasing peptide (164 aa).

Residues 1 to 27 (MGGGGPRRPGTLPLLALLALLAAHGGA) form the signal peptide. Residue Met-54 is modified to Methionine amide. The propeptide occupies 58–164 (STGDFPYAYE…YQLCPTSALS (107 aa)).

It belongs to the bombesin/neuromedin-B/ranatensin family.

It is found in the secreted. The protein resides in the cytoplasmic vesicle. It localises to the secretory vesicle lumen. Its function is as follows. Stimulates the release of gastrin and other gastrointestinal hormones. Stimulates pancreatic protein and fluid secretion, and increases acid secretion from the avian proventriculus. The chain is Gastrin-releasing peptide (GRP) from Gallus gallus (Chicken).